Consider the following 132-residue polypeptide: Protein NrdI (132 aa).

It belongs to the NrdI family.

Its function is as follows. Probably involved in ribonucleotide reductase function. This Agrobacterium fabrum (strain C58 / ATCC 33970) (Agrobacterium tumefaciens (strain C58)) protein is Protein NrdI.